Consider the following 358-residue polypeptide: tRNA-specific 2-thiouridylase MnmA 2 (358 aa).

Residues 11-18 and M37 each bind ATP; that span reads GMSGGVDS. The active-site Nucleophile is the C106. C106 and C202 are disulfide-bonded. Residue G130 coordinates ATP. An interaction with tRNA region spans residues 152 to 154; the sequence is KDQ. The active-site Cysteine persulfide intermediate is the C202. Residues 308-309 are interaction with tRNA; it reads RY.

Belongs to the MnmA/TRMU family.

Its subcellular location is the cytoplasm. The enzyme catalyses S-sulfanyl-L-cysteinyl-[protein] + uridine(34) in tRNA + AH2 + ATP = 2-thiouridine(34) in tRNA + L-cysteinyl-[protein] + A + AMP + diphosphate + H(+). Catalyzes the 2-thiolation of uridine at the wobble position (U34) of tRNA, leading to the formation of s(2)U34. This chain is tRNA-specific 2-thiouridylase MnmA 2, found in Clostridium tetani (strain Massachusetts / E88).